A 158-amino-acid polypeptide reads, in one-letter code: Large ribosomal subunit protein bL21 (158 aa).

A disordered region spans residues 127–158 (TQETKSAASVKKAAKKSAPQKQAAVASNSKED). The segment covering 131-158 (KSAASVKKAAKKSAPQKQAAVASNSKED) has biased composition (low complexity).

The protein belongs to the bacterial ribosomal protein bL21 family. In terms of assembly, part of the 50S ribosomal subunit. Contacts protein L20.

Its function is as follows. This protein binds to 23S rRNA in the presence of protein L20. In Bartonella henselae (strain ATCC 49882 / DSM 28221 / CCUG 30454 / Houston 1) (Rochalimaea henselae), this protein is Large ribosomal subunit protein bL21.